A 250-amino-acid polypeptide reads, in one-letter code: Large ribosomal subunit protein uL13c (250 aa).

The N-terminal 47 residues, 1 to 47 (MATMACASSLTFPSAQTQKSFFGTNVKQTPVLSFPRPTVAAAVAVSA), are a transit peptide targeting the chloroplast.

In terms of assembly, component of the chloroplast large ribosomal subunit (LSU). Mature 70S chloroplast ribosomes of higher plants consist of a small (30S) and a large (50S) subunit. The 30S small subunit contains 1 molecule of ribosomal RNA (16S rRNA) and 24 different proteins. The 50S large subunit contains 3 rRNA molecules (23S, 5S and 4.5S rRNA) and 33 different proteins.

The protein localises to the plastid. It is found in the chloroplast. Its function is as follows. Component of the chloroplast ribosome (chloro-ribosome), a dedicated translation machinery responsible for the synthesis of chloroplast genome-encoded proteins, including proteins of the transcription and translation machinery and components of the photosynthetic apparatus. The chain is Large ribosomal subunit protein uL13c (RPL13) from Spinacia oleracea (Spinach).